We begin with the raw amino-acid sequence, 511 residues long: Membrane-bound lytic murein transglycosylase F (511 aa).

Positions 1 to 19 are cleaved as a signal peptide; that stretch reads MKKLKINYLLIGIVTLLLA. Residues 20–269 form a non-LT domain region; that stretch reads AALWPSIPWS…RLEEKYLGHG (250 aa). Positions 270-511 are LT domain; sequence NDFDYVDTRT…ARMKLPGHLY (242 aa). Glu-314 is an active-site residue.

It in the N-terminal section; belongs to the bacterial solute-binding protein 3 family. The protein in the C-terminal section; belongs to the transglycosylase Slt family.

The protein localises to the cell outer membrane. It catalyses the reaction Exolytic cleavage of the (1-&gt;4)-beta-glycosidic linkage between N-acetylmuramic acid (MurNAc) and N-acetylglucosamine (GlcNAc) residues in peptidoglycan, from either the reducing or the non-reducing ends of the peptidoglycan chains, with concomitant formation of a 1,6-anhydrobond in the MurNAc residue.. In terms of biological role, murein-degrading enzyme that degrades murein glycan strands and insoluble, high-molecular weight murein sacculi, with the concomitant formation of a 1,6-anhydromuramoyl product. Lytic transglycosylases (LTs) play an integral role in the metabolism of the peptidoglycan (PG) sacculus. Their lytic action creates space within the PG sacculus to allow for its expansion as well as for the insertion of various structures such as secretion systems and flagella. This chain is Membrane-bound lytic murein transglycosylase F, found in Klebsiella pneumoniae subsp. pneumoniae (strain ATCC 700721 / MGH 78578).